The primary structure comprises 209 residues: PF03932 family protein CutC (209 aa).

This sequence belongs to the CutC family.

The protein resides in the cytoplasm. Functionally, might participate in the control of copper homeostasis; data from other bacteria suggests it is not involved. The protein is PF03932 family protein CutC of Enterococcus faecalis (strain ATCC 700802 / V583).